Reading from the N-terminus, the 366-residue chain is Carbamoyl phosphate synthase small chain (366 aa).

The tract at residues 1–171 (MLERRYLVLE…KTPYVSTGSD (171 aa)) is CPSase. Positions 47, 221, and 223 each coordinate L-glutamine. Residues 173–360 (SVVLLDFGKK…MTMMKEFKEK (188 aa)) enclose the Glutamine amidotransferase type-1 domain. Catalysis depends on Cys-248, which acts as the Nucleophile. Leu-249, Gln-252, Asn-290, Gly-292, and Tyr-293 together coordinate L-glutamine. Active-site residues include His-333 and Glu-335.

Belongs to the CarA family. As to quaternary structure, composed of two chains; the small (or glutamine) chain promotes the hydrolysis of glutamine to ammonia, which is used by the large (or ammonia) chain to synthesize carbamoyl phosphate. Tetramer of heterodimers (alpha,beta)4.

It carries out the reaction hydrogencarbonate + L-glutamine + 2 ATP + H2O = carbamoyl phosphate + L-glutamate + 2 ADP + phosphate + 2 H(+). The catalysed reaction is L-glutamine + H2O = L-glutamate + NH4(+). It participates in amino-acid biosynthesis; L-arginine biosynthesis; carbamoyl phosphate from bicarbonate: step 1/1. Its pathway is pyrimidine metabolism; UMP biosynthesis via de novo pathway; (S)-dihydroorotate from bicarbonate: step 1/3. Small subunit of the glutamine-dependent carbamoyl phosphate synthetase (CPSase). CPSase catalyzes the formation of carbamoyl phosphate from the ammonia moiety of glutamine, carbonate, and phosphate donated by ATP, constituting the first step of 2 biosynthetic pathways, one leading to arginine and/or urea and the other to pyrimidine nucleotides. The small subunit (glutamine amidotransferase) binds and cleaves glutamine to supply the large subunit with the substrate ammonia. In Staphylococcus haemolyticus (strain JCSC1435), this protein is Carbamoyl phosphate synthase small chain.